We begin with the raw amino-acid sequence, 607 residues long: Elongation factor 4 (607 aa).

Residues 11–193 form the tr-type G domain; the sequence is SKIRNFSIIA…QIVEKVPAPA (183 aa). GTP-binding positions include 23–28 and 140–143; these read DHGKST and NKID.

Belongs to the TRAFAC class translation factor GTPase superfamily. Classic translation factor GTPase family. LepA subfamily.

It is found in the cell membrane. It carries out the reaction GTP + H2O = GDP + phosphate + H(+). Functionally, required for accurate and efficient protein synthesis under certain stress conditions. May act as a fidelity factor of the translation reaction, by catalyzing a one-codon backward translocation of tRNAs on improperly translocated ribosomes. Back-translocation proceeds from a post-translocation (POST) complex to a pre-translocation (PRE) complex, thus giving elongation factor G a second chance to translocate the tRNAs correctly. Binds to ribosomes in a GTP-dependent manner. In Bacillus cereus (strain ATCC 14579 / DSM 31 / CCUG 7414 / JCM 2152 / NBRC 15305 / NCIMB 9373 / NCTC 2599 / NRRL B-3711), this protein is Elongation factor 4.